Reading from the N-terminus, the 614-residue chain is Dihydroxy-acid dehydratase (614 aa).

Asp81 contributes to the Mg(2+) binding site. Cys122 is a binding site for [2Fe-2S] cluster. The Mg(2+) site is built by Asp123 and Lys124. Lys124 carries the post-translational modification N6-carboxylysine. Position 193 (Cys193) interacts with [2Fe-2S] cluster. Glu489 provides a ligand contact to Mg(2+). Catalysis depends on Ser515, which acts as the Proton acceptor.

It belongs to the IlvD/Edd family. In terms of assembly, homodimer. [2Fe-2S] cluster is required as a cofactor. The cofactor is Mg(2+).

It carries out the reaction (2R)-2,3-dihydroxy-3-methylbutanoate = 3-methyl-2-oxobutanoate + H2O. The enzyme catalyses (2R,3R)-2,3-dihydroxy-3-methylpentanoate = (S)-3-methyl-2-oxopentanoate + H2O. The protein operates within amino-acid biosynthesis; L-isoleucine biosynthesis; L-isoleucine from 2-oxobutanoate: step 3/4. It functions in the pathway amino-acid biosynthesis; L-valine biosynthesis; L-valine from pyruvate: step 3/4. Functionally, functions in the biosynthesis of branched-chain amino acids. Catalyzes the dehydration of (2R,3R)-2,3-dihydroxy-3-methylpentanoate (2,3-dihydroxy-3-methylvalerate) into 2-oxo-3-methylpentanoate (2-oxo-3-methylvalerate) and of (2R)-2,3-dihydroxy-3-methylbutanoate (2,3-dihydroxyisovalerate) into 2-oxo-3-methylbutanoate (2-oxoisovalerate), the penultimate precursor to L-isoleucine and L-valine, respectively. This Saccharophagus degradans (strain 2-40 / ATCC 43961 / DSM 17024) protein is Dihydroxy-acid dehydratase.